The sequence spans 189 residues: Hypoxanthine/guanine phosphoribosyltransferase (189 aa).

It belongs to the purine/pyrimidine phosphoribosyltransferase family. Archaeal HPRT subfamily. In terms of assembly, homodimer.

Its subcellular location is the cytoplasm. The catalysed reaction is IMP + diphosphate = hypoxanthine + 5-phospho-alpha-D-ribose 1-diphosphate. The enzyme catalyses GMP + diphosphate = guanine + 5-phospho-alpha-D-ribose 1-diphosphate. It functions in the pathway purine metabolism; IMP biosynthesis via salvage pathway; IMP from hypoxanthine: step 1/1. Functionally, catalyzes a salvage reaction resulting in the formation of IMP that is energically less costly than de novo synthesis. In Methanothermus fervidus (strain ATCC 43054 / DSM 2088 / JCM 10308 / V24 S), this protein is Hypoxanthine/guanine phosphoribosyltransferase.